The sequence spans 287 residues: Protease HtpX (287 aa).

2 consecutive transmembrane segments (helical) span residues 4 to 24 (VMLF…VLNI) and 36 to 56 (LSGL…ISLM). Residue histidine 143 coordinates Zn(2+). Glutamate 144 is a catalytic residue. Histidine 147 contributes to the Zn(2+) binding site. Transmembrane regions (helical) follow at residues 158–178 (LMQG…ANIV) and 192–212 (MVYF…ASFI). Glutamate 221 provides a ligand contact to Zn(2+).

It belongs to the peptidase M48B family. Zn(2+) serves as cofactor.

The protein localises to the cell inner membrane. The protein is Protease HtpX of Vibrio atlanticus (strain LGP32) (Vibrio splendidus (strain Mel32)).